An 83-amino-acid chain; its full sequence is Conotoxin MiEr92 (83 aa).

The signal sequence occupies residues 1–22; the sequence is MKLTCVLIVIMLFLTVCPLITA. Positions 23-49 are excised as a propeptide; the sequence is DHSRDKQEHPAMRLKDRIRYLRRGKLT. 3 disulfide bridges follow: Cys52–Cys67, Cys59–Cys72, and Cys66–Cys81.

The protein belongs to the conotoxin O1 superfamily. As to expression, expressed by the venom duct.

It is found in the secreted. The protein is Conotoxin MiEr92 of Conus miles (Soldier cone).